The chain runs to 244 residues: 1-(5-phosphoribosyl)-5-[(5-phosphoribosylamino)methylideneamino] imidazole-4-carboxamide isomerase (244 aa).

Aspartate 10 serves as the catalytic Proton acceptor. Aspartate 132 (proton donor) is an active-site residue.

Belongs to the HisA/HisF family.

The protein localises to the cytoplasm. It carries out the reaction 1-(5-phospho-beta-D-ribosyl)-5-[(5-phospho-beta-D-ribosylamino)methylideneamino]imidazole-4-carboxamide = 5-[(5-phospho-1-deoxy-D-ribulos-1-ylimino)methylamino]-1-(5-phospho-beta-D-ribosyl)imidazole-4-carboxamide. It participates in amino-acid biosynthesis; L-histidine biosynthesis; L-histidine from 5-phospho-alpha-D-ribose 1-diphosphate: step 4/9. This Xanthomonas euvesicatoria pv. vesicatoria (strain 85-10) (Xanthomonas campestris pv. vesicatoria) protein is 1-(5-phosphoribosyl)-5-[(5-phosphoribosylamino)methylideneamino] imidazole-4-carboxamide isomerase.